The following is a 309-amino-acid chain: Hydroxyacylglutathione hydrolase, mitochondrial (309 aa).

The transit peptide at Met1 to Gly24 directs the protein to the mitochondrion. Position 90 is an N6-acetyllysine (Lys90). Residues His103, His105, Asp107, and His108 each coordinate Zn(2+). Lys117 carries the N6-acetyllysine modification. Zn(2+) is bound by residues His159 and Asp183. Substrate is bound by residues Lys192–Tyr194 and His222–Tyr224. His222 lines the Zn(2+) pocket. Lys230 carries the post-translational modification N6-acetyllysine; alternate. Lys230 is modified (N6-succinyllysine; alternate). Arg298–Lys301 provides a ligand contact to substrate.

The protein belongs to the metallo-beta-lactamase superfamily. Glyoxalase II family. In terms of assembly, monomer. Zn(2+) is required as a cofactor.

It localises to the mitochondrion matrix. It is found in the cytoplasm. It catalyses the reaction an S-(2-hydroxyacyl)glutathione + H2O = a 2-hydroxy carboxylate + glutathione + H(+). It carries out the reaction (R)-S-lactoylglutathione + H2O = (R)-lactate + glutathione + H(+). It functions in the pathway secondary metabolite metabolism; methylglyoxal degradation; (R)-lactate from methylglyoxal: step 2/2. In terms of biological role, thiolesterase that catalyzes the hydrolysis of S-D-lactoyl-glutathione to form glutathione and D-lactic acid. The polypeptide is Hydroxyacylglutathione hydrolase, mitochondrial (Hagh) (Mus musculus (Mouse)).